Reading from the N-terminus, the 234-residue chain is HTH-type transcriptional regulator ArcR (234 aa).

Val-40–Asp-129 serves as a coordination point for a nucleoside 3',5'-cyclic phosphate. The HTH crp-type domain maps to Lys-155–Leu-228. Positions Ile-188–His-207 form a DNA-binding region, H-T-H motif.

The protein localises to the cytoplasm. Its function is as follows. Positively regulates the expression of the arcABDCR operon under anaerobic conditions, thus playing an essential role in arginine catabolism. May also control the expression of genes encoding proteins which are involved in anaerobic metabolism. Can bind cyclic AMP. The polypeptide is HTH-type transcriptional regulator ArcR (arcR) (Staphylococcus aureus (strain USA300 / TCH1516)).